The chain runs to 492 residues: Bifunctional protein GlmU (492 aa).

The segment at 1–241 (MTFRGDTAVV…SALVAGVNDR (241 aa)) is pyrophosphorylase. UDP-N-acetyl-alpha-D-glucosamine-binding positions include 12-15 (LAAG), lysine 26, glutamine 83, and 88-89 (GT). Mg(2+) is bound at residue aspartate 114. Glycine 151, glutamate 166, asparagine 181, and asparagine 239 together coordinate UDP-N-acetyl-alpha-D-glucosamine. Residue asparagine 239 coordinates Mg(2+). The segment at 242–262 (VQLAQLGAELNRRIVAAHQMA) is linker. The N-acetyltransferase stretch occupies residues 263-492 (GVTVIDPATT…TPPPDADQTP (230 aa)). Residues arginine 344 and lysine 362 each contribute to the UDP-N-acetyl-alpha-D-glucosamine site. Histidine 374 serves as the catalytic Proton acceptor. Tyrosine 377 and asparagine 388 together coordinate UDP-N-acetyl-alpha-D-glucosamine. Residues alanine 391, 397-398 (NY), and alanine 434 each bind acetyl-CoA. The interval 451 to 492 (GGPQRNIEDWVQQKRPGTPSAEAARKASAEQSTPPPDADQTP) is disordered. Pro residues predominate over residues 483 to 492 (TPPPDADQTP).

It in the N-terminal section; belongs to the N-acetylglucosamine-1-phosphate uridyltransferase family. This sequence in the C-terminal section; belongs to the transferase hexapeptide repeat family. As to quaternary structure, homotrimer. The cofactor is Mg(2+).

It is found in the cytoplasm. The catalysed reaction is alpha-D-glucosamine 1-phosphate + acetyl-CoA = N-acetyl-alpha-D-glucosamine 1-phosphate + CoA + H(+). It catalyses the reaction N-acetyl-alpha-D-glucosamine 1-phosphate + UTP + H(+) = UDP-N-acetyl-alpha-D-glucosamine + diphosphate. Its pathway is nucleotide-sugar biosynthesis; UDP-N-acetyl-alpha-D-glucosamine biosynthesis; N-acetyl-alpha-D-glucosamine 1-phosphate from alpha-D-glucosamine 6-phosphate (route II): step 2/2. It participates in nucleotide-sugar biosynthesis; UDP-N-acetyl-alpha-D-glucosamine biosynthesis; UDP-N-acetyl-alpha-D-glucosamine from N-acetyl-alpha-D-glucosamine 1-phosphate: step 1/1. It functions in the pathway bacterial outer membrane biogenesis; LPS lipid A biosynthesis. In terms of biological role, catalyzes the last two sequential reactions in the de novo biosynthetic pathway for UDP-N-acetylglucosamine (UDP-GlcNAc). The C-terminal domain catalyzes the transfer of acetyl group from acetyl coenzyme A to glucosamine-1-phosphate (GlcN-1-P) to produce N-acetylglucosamine-1-phosphate (GlcNAc-1-P), which is converted into UDP-GlcNAc by the transfer of uridine 5-monophosphate (from uridine 5-triphosphate), a reaction catalyzed by the N-terminal domain. The sequence is that of Bifunctional protein GlmU from Mycobacterium marinum (strain ATCC BAA-535 / M).